Consider the following 45-residue polypeptide: Large ribosomal subunit protein bL34c (45 aa).

The interval 1-21 (MIQRTLTGTNRKKTKRSGFRS) is disordered. The span at 10-19 (NRKKTKRSGF) shows a compositional bias: basic residues.

This sequence belongs to the bacterial ribosomal protein bL34 family.

Its subcellular location is the plastid. It is found in the chloroplast. The protein is Large ribosomal subunit protein bL34c (rpl34) of Cyanidium caldarium (Red alga).